The primary structure comprises 189 residues: Ion-translocating oxidoreductase complex subunit B (189 aa).

The segment at 1 to 26 (MSAVMIAVVLLGLLALVFGAILGFAA) is hydrophobic. Residues 32–90 (EGDPLVDQVESLLPQTQCGQCGYPGCRPYAEAIAGGDQINKCPPGGTATMEKIAELMGV) form the 4Fe-4S domain. Positions 49, 52, 57, 73, 114, 117, 120, 124, 144, 147, 150, and 154 each coordinate [4Fe-4S] cluster. 4Fe-4S ferredoxin-type domains follow at residues 105-134 (KVAY…GAGK) and 136-164 (MHTV…MLPV).

Belongs to the 4Fe4S bacterial-type ferredoxin family. RnfB subfamily. As to quaternary structure, the complex is composed of six subunits: RnfA, RnfB, RnfC, RnfD, RnfE and RnfG. [4Fe-4S] cluster serves as cofactor.

It is found in the cell inner membrane. Its function is as follows. Part of a membrane-bound complex that couples electron transfer with translocation of ions across the membrane. This is Ion-translocating oxidoreductase complex subunit B from Shewanella amazonensis (strain ATCC BAA-1098 / SB2B).